Reading from the N-terminus, the 1019-residue chain is Probable LRR receptor-like serine/threonine-protein kinase At1g29720 (1019 aa).

A signal peptide spans 1-19 (MSIILWSFFLFFTIILSSL). The Extracellular portion of the chain corresponds to 20 to 615 (TNITTLASFS…EKTKHHIKYP (596 aa)). 3 N-linked (GlcNAc...) asparagine glycosylation sites follow: N21, N79, and N90. LRR repeat units follow at residues 93 to 117 (ICRI…LTKL), 118 to 141 (PYLK…WAKM), 143 to 165 (YLTS…LQNF), 166 to 189 (KNLT…LGNL), 190 to 212 (TSLT…TLAR), 214 to 236 (VNLE…YIGN), 237 to 261 (WTRL…VVRL), 263 to 283 (NLLE…NLSS), 284 to 307 (KGLK…IWNL), 308 to 330 (TDLK…VQNP), 332 to 351 (KNIY…GGLL), 352 to 374 (NSQS…QKGS), and 375 to 398 (TINT…AVPA). N-linked (GlcNAc...) asparagine glycans are attached at residues N153, N167, and N188. N-linked (GlcNAc...) asparagine glycosylation is found at N225 and N236. Residues N280 and N306 are each glycosylated (N-linked (GlcNAc...) asparagine). N363, N387, N469, and N558 each carry an N-linked (GlcNAc...) asparagine glycan. A helical membrane pass occupies residues 616–636 (LILGASGALVTIVLLAVGIYA). The Cytoplasmic segment spans residues 637–1019 (RGIYRRDNNR…STVENSSSSL (383 aa)). Residues 673-946 (FDQANKLGEG…EAVKMLEGEI (274 aa)) form the Protein kinase domain. Residues 679–687 (LGEGGFGSV) and K701 contribute to the ATP site. Y746 carries the phosphotyrosine modification. The active-site Proton acceptor is the D797. S830 bears the Phosphoserine mark. T831 and T836 each carry phosphothreonine. Y844 bears the Phosphotyrosine mark.

It belongs to the protein kinase superfamily. Ser/Thr protein kinase family.

It is found in the cell membrane. The catalysed reaction is L-seryl-[protein] + ATP = O-phospho-L-seryl-[protein] + ADP + H(+). It catalyses the reaction L-threonyl-[protein] + ATP = O-phospho-L-threonyl-[protein] + ADP + H(+). The chain is Probable LRR receptor-like serine/threonine-protein kinase At1g29720 (RFK1) from Arabidopsis thaliana (Mouse-ear cress).